The primary structure comprises 490 residues: MVEVEKKIKEGLTFDDVLLVPQYSEVLPHEVDVSTYLTKRIKLNIPIVSAAMDTVTEARLAIALAREGGIGIIHRNLPIKKQAEEVEKVKKSESGMIINPVTVKPDTRVKEALDIMAKYKISGVPVVDEERKLIGILTNRDLRFIKPEDYSKPVSEFMTKENLITAPEGITLDEAEEIFRKYKIEKLPIVDKEGKIKGLITIKDIVKRKKYPNACKDELGRLRVGAAVGTGEETLDRVAALVEAGVDVIVVDTAHGHSKRVLETVEKIKANFPEVDVIAGNVATAEGTKALIEAGADAVKVGVGPGSICTTRIVAGVGVPQLTAIMEAASAAREYDIPIIADGGIRYSGDIVKALAAGASAVMLGNLLAGTEEAPGETIYYQGRAYKVYRGMGSLGAMSSRLSSDRYGQEKMEKFVPEGIEGRVPYKGKLADVVYQLVGGLRSGMGYVGARNIKELQEKAKFVRITWAGYRESHVHDVQITREAPNYWVD.

2 CBS domains span residues methionine 96–valine 154 and methionine 158–glutamate 218. Residues aspartate 252 and glycine 302 to glycine 304 contribute to the NAD(+) site. Positions 304 and 306 each coordinate K(+). Serine 307 contributes to the IMP binding site. Residue cysteine 309 participates in K(+) binding. Cysteine 309 (thioimidate intermediate) is an active-site residue. Residues aspartate 342–glycine 344, glycine 365–asparagine 366, and tyrosine 389–glycine 393 contribute to the IMP site. Arginine 406 (proton acceptor) is an active-site residue. Glutamate 418 provides a ligand contact to IMP. Residues glutamate 472, serine 473, and histidine 474 each coordinate K(+).

It belongs to the IMPDH/GMPR family. As to quaternary structure, homotetramer. K(+) serves as cofactor.

The catalysed reaction is IMP + NAD(+) + H2O = XMP + NADH + H(+). The protein operates within purine metabolism; XMP biosynthesis via de novo pathway; XMP from IMP: step 1/1. With respect to regulation, mycophenolic acid (MPA) is a non-competitive inhibitor that prevents formation of the closed enzyme conformation by binding to the same site as the amobile flap. In contrast, mizoribine monophosphate (MZP) is a competitive inhibitor that induces the closed conformation. MPA is a potent inhibitor of mammalian IMPDHs but a poor inhibitor of the bacterial enzymes. MZP is a more potent inhibitor of bacterial IMPDH. Its function is as follows. Catalyzes the conversion of inosine 5'-phosphate (IMP) to xanthosine 5'-phosphate (XMP), the first committed and rate-limiting step in the de novo synthesis of guanine nucleotides, and therefore plays an important role in the regulation of cell growth. The sequence is that of Inosine-5'-monophosphate dehydrogenase from Aquifex aeolicus (strain VF5).